Here is a 163-residue protein sequence, read N- to C-terminus: Putative H/ACA ribonucleoprotein complex subunit 2-like protein (163 aa).

The protein belongs to the eukaryotic ribosomal protein eL8 family. As to quaternary structure, component of the small nucleolar ribonucleoprotein particle containing H/ACA-type snoRNAs (H/ACA snoRNPs).

Its subcellular location is the nucleus. The protein resides in the nucleolus. In terms of biological role, required for ribosome biogenesis. Part of a complex which catalyzes pseudouridylation of rRNA. This involves the isomerization of uridine such that the ribose is subsequently attached to C5, instead of the normal N1. Pseudouridine ('psi') residues may serve to stabilize the conformation of rRNAs. The polypeptide is Putative H/ACA ribonucleoprotein complex subunit 2-like protein (Caenorhabditis briggsae).